Reading from the N-terminus, the 509-residue chain is Legumin A (509 aa).

The first 21 residues, 1–21, serve as a signal peptide directing secretion; that stretch reads MAINPSLLFLSLLFLFNGCLA. Intrachain disulfides connect Cys34–Cys67 and Cys110–Cys331. One can recognise a Cupin type-1 1 domain in the interval 39 to 273; that stretch reads LRASAPQTRI…AFNVDHDIIR (235 aa). Disordered stretches follow at residues 187–248 and 298–325; these read AGNP…ESSS and PRME…QDNG. A compositionally biased stretch (acidic residues) spans 212 to 228; sequence EESEEEEGEGEEEEEED. Positions 299–314 are enriched in basic and acidic residues; that stretch reads RMEEEEREERQQEQRY. The Cupin type-1 2 domain maps to 337–486; it reads ENLADPERAD…SYQVSREDAR (150 aa).

It belongs to the 11S seed storage protein (globulins) family. Hexamer; each subunit is composed of an acidic and a basic chain derived from a single precursor and linked by a disulfide bond.

Its function is as follows. This is a seed storage protein. This Gossypium hirsutum (Upland cotton) protein is Legumin A (LEGA).